The chain runs to 759 residues: Protein AKNAD1 (759 aa).

The segment at 169-246 (TDQLNPKKDG…HTEKASSGNR (78 aa)) is disordered. A compositionally biased stretch (polar residues) spans 181–192 (SNKPGSPTMTEE). Residues 371–482 (QKISQGKQMC…EDVKDKVDES (112 aa)) are a coiled coil. Positions 484–496 (YTSAPSLPVSSPV) are enriched in polar residues. Disordered stretches follow at residues 484 to 543 (YTSA…QEAP), 634 to 654 (EKAPHSDSTPNSDTGHSFCSD), 678 to 723 (CRKE…PSLA), and 735 to 759 (PDTSKSSPTPGWQEAELGLENMKSQ). A compositionally biased stretch (low complexity) spans 497–509 (TLDDLASTSSSLS). Positions 639-654 (SDSTPNSDTGHSFCSD) are enriched in polar residues. The span at 679-688 (RKEPPKEFHY) shows a compositional bias: basic and acidic residues. Residues 735–744 (PDTSKSSPTP) show a composition bias toward polar residues.

This sequence belongs to the AKNA family.

This chain is Protein AKNAD1 (AKNAD1), found in Macaca fascicularis (Crab-eating macaque).